The following is a 653-amino-acid chain: Fructose-1,6-bisphosphatase class 3 2 (653 aa).

It belongs to the FBPase class 3 family. Mn(2+) serves as cofactor.

The catalysed reaction is beta-D-fructose 1,6-bisphosphate + H2O = beta-D-fructose 6-phosphate + phosphate. Its pathway is carbohydrate biosynthesis; gluconeogenesis. This is Fructose-1,6-bisphosphatase class 3 2 from Clostridium beijerinckii (strain ATCC 51743 / NCIMB 8052) (Clostridium acetobutylicum).